Reading from the N-terminus, the 423-residue chain is Elongation factor 1-alpha (423 aa).

In terms of domain architecture, tr-type G spans 5 to 211; sequence KEHINLAFIG…DNLEPPEKPT (207 aa). Positions 14 to 21 are G1; that stretch reads GHVDHGKS. GTP is bound at residue 14-21; it reads GHVDHGKS. Residue Ser21 participates in Mg(2+) binding. Residues 60–64 form a G2 region; that stretch reads GVTID. The G3 stretch occupies residues 81–84; sequence DCPG. GTP contacts are provided by residues 81 to 85 and 136 to 139; these read DCPGH and NKMD. Residues 136–139 form a G4 region; sequence NKMD. The interval 175-177 is G5; the sequence is SAF.

The protein belongs to the TRAFAC class translation factor GTPase superfamily. Classic translation factor GTPase family. EF-Tu/EF-1A subfamily.

The protein resides in the cytoplasm. It catalyses the reaction GTP + H2O = GDP + phosphate + H(+). Its function is as follows. GTP hydrolase that promotes the GTP-dependent binding of aminoacyl-tRNA to the A-site of ribosomes during protein biosynthesis. This chain is Elongation factor 1-alpha, found in Methanopyrus kandleri (strain AV19 / DSM 6324 / JCM 9639 / NBRC 100938).